The chain runs to 430 residues: Histidinol dehydrogenase (430 aa).

Tyr-129, Gln-190, and Asn-213 together coordinate NAD(+). Positions 236, 258, and 261 each coordinate substrate. Residues Gln-258 and His-261 each coordinate Zn(2+). Catalysis depends on proton acceptor residues Glu-326 and His-327. 4 residues coordinate substrate: His-327, Asp-360, Glu-414, and His-419. Asp-360 provides a ligand contact to Zn(2+). His-419 contributes to the Zn(2+) binding site.

Belongs to the histidinol dehydrogenase family. Zn(2+) is required as a cofactor.

It catalyses the reaction L-histidinol + 2 NAD(+) + H2O = L-histidine + 2 NADH + 3 H(+). The protein operates within amino-acid biosynthesis; L-histidine biosynthesis; L-histidine from 5-phospho-alpha-D-ribose 1-diphosphate: step 9/9. In terms of biological role, catalyzes the sequential NAD-dependent oxidations of L-histidinol to L-histidinaldehyde and then to L-histidine. The polypeptide is Histidinol dehydrogenase (Gluconobacter oxydans (strain 621H) (Gluconobacter suboxydans)).